Consider the following 230-residue polypeptide: Triosephosphate isomerase (230 aa).

A substrate-binding site is contributed by 9–11 (NYK). H93 functions as the Electrophile in the catalytic mechanism. E141 acts as the Proton acceptor in catalysis. Residues I146, G180, and 201–202 (AS) each bind substrate.

It belongs to the triosephosphate isomerase family. Homotetramer; dimer of dimers.

Its subcellular location is the cytoplasm. It carries out the reaction D-glyceraldehyde 3-phosphate = dihydroxyacetone phosphate. It functions in the pathway carbohydrate biosynthesis; gluconeogenesis. The protein operates within carbohydrate degradation; glycolysis; D-glyceraldehyde 3-phosphate from glycerone phosphate: step 1/1. Involved in the gluconeogenesis. Catalyzes stereospecifically the conversion of dihydroxyacetone phosphate (DHAP) to D-glyceraldehyde-3-phosphate (G3P). In Sulfolobus acidocaldarius (strain ATCC 33909 / DSM 639 / JCM 8929 / NBRC 15157 / NCIMB 11770), this protein is Triosephosphate isomerase.